Consider the following 293-residue polypeptide: Protease HtpX (293 aa).

Helical transmembrane passes span 4 to 24 (IALF…VLSL) and 34 to 54 (GLLI…LLMS). A Zn(2+)-binding site is contributed by His139. The active site involves Glu140. A Zn(2+)-binding site is contributed by His143. A run of 2 helical transmembrane segments spans residues 158–178 (VVNT…AGFM) and 193–213 (LIYF…ASII). Glu222 is a binding site for Zn(2+).

It belongs to the peptidase M48B family. Zn(2+) serves as cofactor.

Its subcellular location is the cell inner membrane. In Enterobacter sp. (strain 638), this protein is Protease HtpX.